The chain runs to 163 residues: Endoribonuclease YbeY (163 aa).

Histidine 119, histidine 123, and histidine 129 together coordinate Zn(2+).

It belongs to the endoribonuclease YbeY family. Zn(2+) is required as a cofactor.

The protein localises to the cytoplasm. Single strand-specific metallo-endoribonuclease involved in late-stage 70S ribosome quality control and in maturation of the 3' terminus of the 16S rRNA. The polypeptide is Endoribonuclease YbeY (Actinobacillus pleuropneumoniae serotype 5b (strain L20)).